We begin with the raw amino-acid sequence, 767 residues long: 5-methyltetrahydropteroyltriglutamate--homocysteine methyltransferase (767 aa).

2 residues coordinate 5-methyltetrahydropteroyltri-L-glutamate: K19 and N126. Residues 446–448 (IGS) and E499 contribute to the L-homocysteine site. L-methionine-binding positions include 446 to 448 (IGS) and E499. 5-methyltetrahydropteroyltri-L-glutamate is bound by residues D504, Y527, 530 to 531 (RY), and W576. D614 lines the L-homocysteine pocket. L-methionine is bound at residue D614. Residues H657, C659, and E679 each coordinate Zn(2+). The active-site Proton donor is H707. C739 provides a ligand contact to Zn(2+).

The protein belongs to the vitamin-B12 independent methionine synthase family. Zn(2+) serves as cofactor.

The catalysed reaction is 5-methyltetrahydropteroyltri-L-glutamate + L-homocysteine = tetrahydropteroyltri-L-glutamate + L-methionine. It participates in amino-acid biosynthesis; L-methionine biosynthesis via de novo pathway; L-methionine from L-homocysteine (MetE route): step 1/1. Its activity is regulated as follows. Inhibited weakly by methotrexate. In terms of biological role, catalyzes the transfer of a methyl group from 5-methyltetrahydrofolate to homocysteine resulting in methionine formation. This chain is 5-methyltetrahydropteroyltriglutamate--homocysteine methyltransferase, found in Candida albicans (strain SC5314 / ATCC MYA-2876) (Yeast).